A 312-amino-acid chain; its full sequence is Olfactory receptor 1D5 (312 aa).

The Extracellular portion of the chain corresponds to 1 to 25; sequence MDGDNQSENSQFLLLGISESPEQQR. A glycan (N-linked (GlcNAc...) asparagine) is linked at Asn5. The helical transmembrane segment at 26–49 threads the bilayer; it reads ILFWMFLSMYLVTVLGNVLIILAI. The Cytoplasmic portion of the chain corresponds to 50–57; sequence SSDSHLHT. Residues 58–79 traverse the membrane as a helical segment; sequence PMYFFLANLSFTDLFFVTNTIP. The Extracellular segment spans residues 80-100; sequence KMLVNFQSQNKAISYAGCLTQ. Cys97 and Cys189 are joined by a disulfide. A helical membrane pass occupies residues 101–120; the sequence is LYFLVSLVTLDNLILAVMAY. Residues 121–140 lie on the Cytoplasmic side of the membrane; sequence DRYVATCCPLHYVTAMSPGL. A helical transmembrane segment spans residues 141–158; the sequence is CVLLLSLCWGLSVLYGLL. Residues 159-196 lie on the Extracellular side of the membrane; the sequence is LTFLLTRVTFCGPREIHYLFCDMYILLWLACSNTHIIH. A helical membrane pass occupies residues 197-220; sequence TALIATGCFIFLTPLGFMTTSYVR. The Cytoplasmic portion of the chain corresponds to 221-237; it reads IVRTILQMPSASKKYKT. The chain crosses the membrane as a helical span at residues 238-260; that stretch reads FSTCASHLGVVSLFYGTLAMVYL. Residues 261-271 lie on the Extracellular side of the membrane; sequence QPLHTYSMKDS. Residues 272–291 form a helical membrane-spanning segment; it reads VATVMYAVLTPMMNPFIYRL. Residues 292–312 are Cytoplasmic-facing; it reads RNKDMHGAPGRVLWRPFQRPK.

It belongs to the G-protein coupled receptor 1 family.

The protein localises to the cell membrane. Its function is as follows. Odorant receptor. The chain is Olfactory receptor 1D5 (OR1D5) from Homo sapiens (Human).